A 266-amino-acid chain; its full sequence is Glucosamine-6-phosphate deaminase (266 aa).

The Proton acceptor; for enolization step role is filled by D72. D141 acts as the For ring-opening step in catalysis. H143 (proton acceptor; for ring-opening step) is an active-site residue. E148 acts as the For ring-opening step in catalysis.

This sequence belongs to the glucosamine/galactosamine-6-phosphate isomerase family. NagB subfamily. In terms of assembly, homohexamer; trimer of disulfide-linked dimers.

It carries out the reaction alpha-D-glucosamine 6-phosphate + H2O = beta-D-fructose 6-phosphate + NH4(+). It participates in amino-sugar metabolism; N-acetylneuraminate degradation; D-fructose 6-phosphate from N-acetylneuraminate: step 5/5. Allosterically activated by N-acetylglucosamine 6-phosphate (GlcNAc6P). Catalyzes the reversible isomerization-deamination of glucosamine 6-phosphate (GlcN6P) to form fructose 6-phosphate (Fru6P) and ammonium ion. This Vibrio parahaemolyticus serotype O3:K6 (strain RIMD 2210633) protein is Glucosamine-6-phosphate deaminase.